Reading from the N-terminus, the 301-residue chain is Probable alpha-L-glutamate ligase 2 (301 aa).

Positions 104-287 (LQLLSRKGIG…VAEPIVEYIE (184 aa)) constitute an ATP-grasp domain. ATP-binding positions include K141, 178 to 179 (EY), D187, and 211 to 213 (RSN). The Mg(2+) site is built by D248, E260, and N262. Positions 248, 260, and 262 each coordinate Mn(2+).

Belongs to the RimK family. It depends on Mg(2+) as a cofactor. Mn(2+) serves as cofactor.

This Shewanella amazonensis (strain ATCC BAA-1098 / SB2B) protein is Probable alpha-L-glutamate ligase 2.